The sequence spans 197 residues: 3-isopropylmalate dehydratase small subunit (197 aa).

The protein belongs to the LeuD family. LeuD type 1 subfamily. In terms of assembly, heterodimer of LeuC and LeuD.

The enzyme catalyses (2R,3S)-3-isopropylmalate = (2S)-2-isopropylmalate. Its pathway is amino-acid biosynthesis; L-leucine biosynthesis; L-leucine from 3-methyl-2-oxobutanoate: step 2/4. Functionally, catalyzes the isomerization between 2-isopropylmalate and 3-isopropylmalate, via the formation of 2-isopropylmaleate. The polypeptide is 3-isopropylmalate dehydratase small subunit (Acidothermus cellulolyticus (strain ATCC 43068 / DSM 8971 / 11B)).